Here is a 514-residue protein sequence, read N- to C-terminus: Maturase K (514 aa).

It belongs to the intron maturase 2 family. MatK subfamily.

The protein localises to the plastid. Its subcellular location is the chloroplast. Its function is as follows. Usually encoded in the trnK tRNA gene intron. Probably assists in splicing its own and other chloroplast group II introns. The polypeptide is Maturase K (Phoenix dactylifera (Date palm)).